The sequence spans 310 residues: Acetylglutamate kinase (310 aa).

Residues 70-71 (GG), Arg92, and Asn191 each bind substrate.

This sequence belongs to the acetylglutamate kinase family. ArgB subfamily.

It localises to the cytoplasm. It catalyses the reaction N-acetyl-L-glutamate + ATP = N-acetyl-L-glutamyl 5-phosphate + ADP. Its pathway is amino-acid biosynthesis; L-arginine biosynthesis; N(2)-acetyl-L-ornithine from L-glutamate: step 2/4. Catalyzes the ATP-dependent phosphorylation of N-acetyl-L-glutamate. The chain is Acetylglutamate kinase from Corynebacterium diphtheriae (strain ATCC 700971 / NCTC 13129 / Biotype gravis).